Consider the following 351-residue polypeptide: L-threonine 3-dehydrogenase (351 aa).

Cysteine 42 is a binding site for Zn(2+). Catalysis depends on charge relay system residues threonine 44 and histidine 47. Zn(2+)-binding residues include histidine 67, glutamate 68, cysteine 97, cysteine 100, cysteine 103, and cysteine 111. NAD(+) is bound by residues isoleucine 179, aspartate 199, arginine 204, leucine 266–leucine 268, and isoleucine 291–threonine 292.

The protein belongs to the zinc-containing alcohol dehydrogenase family. In terms of assembly, homotetramer. It depends on Zn(2+) as a cofactor.

Its subcellular location is the cytoplasm. The catalysed reaction is L-threonine + NAD(+) = (2S)-2-amino-3-oxobutanoate + NADH + H(+). The protein operates within amino-acid degradation; L-threonine degradation via oxydo-reductase pathway; glycine from L-threonine: step 1/2. In terms of biological role, catalyzes the NAD(+)-dependent oxidation of L-threonine to 2-amino-3-ketobutyrate. This chain is L-threonine 3-dehydrogenase, found in Symbiobacterium thermophilum (strain DSM 24528 / JCM 14929 / IAM 14863 / T).